A 186-amino-acid polypeptide reads, in one-letter code: Putative manganese efflux pump MntP (186 aa).

6 helical membrane passes run 1–21 (MSFLTNFLLGLGLAMDAFAVS), 39–59 (LAVFFGSFQAMMPVLGWIGGS), 61–81 (VSSFVSDYAPWIAFLLLAFIG), 102–122 (YSVLFLLAVATSIDALAVGMS), 134–156 (VIIIGCVTFVMSFCGAILGYRLG), and 165–185 (ILGGLILIGLGGKILAEHMLW).

Belongs to the MntP (TC 9.B.29) family.

It localises to the cell membrane. Functionally, probably functions as a manganese efflux pump. The chain is Putative manganese efflux pump MntP from Methanosarcina acetivorans (strain ATCC 35395 / DSM 2834 / JCM 12185 / C2A).